The primary structure comprises 51 residues: Large ribosomal subunit protein bL33 (51 aa).

Positions 1–23 (MREKIKLESSAGTGHFYTTTKNK) are disordered. Over residues 10 to 20 (SAGTGHFYTTT) the composition is skewed to polar residues.

It belongs to the bacterial ribosomal protein bL33 family.

This chain is Large ribosomal subunit protein bL33, found in Nitrosomonas eutropha (strain DSM 101675 / C91 / Nm57).